We begin with the raw amino-acid sequence, 124 residues long: Glutaredoxin-2 (124 aa).

A disulfide bond links Cys13 and Cys16.

The protein belongs to the glutaredoxin family. As to quaternary structure, homodimer.

Its subcellular location is the host cytoplasm. Its function is as follows. Glutaredoxin necessary for virion morphogenesis and virus replication. Functions as a thiol-disulfide transfer protein between membrane-associated OPG128 and substrates OPG095 or OPG053. The complete pathway for formation of disulfide bonds in intracellular virion membrane proteins sequentially involves oxidation of OPG072, OPG128 and OPG088. Exhibit thioltransferase and dehydroascorbate reductase activities in vitro. This chain is Glutaredoxin-2 (OPG088), found in Mus musculus (Mouse).